A 305-amino-acid polypeptide reads, in one-letter code: Ubiquinone biosynthesis protein COQ4 homolog, mitochondrial (305 aa).

Zn(2+) is bound by residues His150, Asp151, His154, and Glu166.

The protein belongs to the COQ4 family. In terms of assembly, component of a multi-subunit COQ enzyme complex. Requires Zn(2+) as cofactor.

It localises to the mitochondrion inner membrane. The catalysed reaction is a 4-hydroxy-3-methoxy-5-(all-trans-polyprenyl)benzoate + H(+) = a 2-methoxy-6-(all-trans-polyprenyl)phenol + CO2. The protein operates within cofactor biosynthesis; ubiquinone biosynthesis. Its function is as follows. Lyase that catalyzes the C1-decarboxylation of 4-hydroxy-3-methoxy-5-(all-trans-polyprenyl)benzoic acid into 2-methoxy-6-(all-trans-polyprenyl)phenol during ubiquinone biosynthesis. This chain is Ubiquinone biosynthesis protein COQ4 homolog, mitochondrial, found in Cryptosporidium parvum (strain Iowa II).